Reading from the N-terminus, the 323-residue chain is Cyclin-dependent kinase 1 (323 aa).

In terms of domain architecture, Protein kinase spans 4 to 306; the sequence is YQKIEKIGEG…AKQACMHPYF (303 aa). Residues 10–18 and Lys34 contribute to the ATP site; that span reads IGEGTYGVV. A Phosphothreonine modification is found at Thr14. Residue Tyr15 is modified to Phosphotyrosine. The Proton acceptor role is filled by Asp147. Thr180 is modified (phosphothreonine; by CAK).

Belongs to the protein kinase superfamily. CMGC Ser/Thr protein kinase family. CDC2/CDKX subfamily. In terms of assembly, forms a stable but non-covalent complex with a regulatory subunit (SUC1) and with a cyclin.

The catalysed reaction is L-seryl-[protein] + ATP = O-phospho-L-seryl-[protein] + ADP + H(+). It carries out the reaction L-threonyl-[protein] + ATP = O-phospho-L-threonyl-[protein] + ADP + H(+). Phosphorylation at Thr-14 or Tyr-15 inactivates the enzyme, while phosphorylation at Thr-180 activates it. In terms of biological role, cyclin-dependent kinase that acts as a master regulator of the mitotic and meiotic cell cycles. The polypeptide is Cyclin-dependent kinase 1 (Emericella nidulans (strain FGSC A4 / ATCC 38163 / CBS 112.46 / NRRL 194 / M139) (Aspergillus nidulans)).